Here is a 546-residue protein sequence, read N- to C-terminus: CTP synthase (546 aa).

The interval 1–264 is amidoligase domain; sequence MRYIVVTGGV…TKYIMKAMRL (264 aa). Ser-12 contributes to the CTP binding site. Ser-12 serves as a coordination point for UTP. ATP is bound by residues 13–18 and Asp-70; that span reads GLGKGI. Residues Asp-70 and Glu-140 each contribute to the Mg(2+) site. Residues 147–149, 185–190, and Lys-221 contribute to the CTP site; these read DIE and KTKPTQ. UTP-binding positions include 185-190 and Lys-221; that span reads KTKPTQ. The Glutamine amidotransferase type-1 domain maps to 298-534; that stretch reads GSQCTDPMKD…VEAMKAQRLR (237 aa). Gly-357 provides a ligand contact to L-glutamine. Cys-384 functions as the Nucleophile; for glutamine hydrolysis in the catalytic mechanism. L-glutamine contacts are provided by residues 385–388, Glu-408, and Arg-464; that span reads FGMQ. Active-site residues include His-507 and Glu-509.

The protein belongs to the CTP synthase family. Homotetramer.

It carries out the reaction UTP + L-glutamine + ATP + H2O = CTP + L-glutamate + ADP + phosphate + 2 H(+). The catalysed reaction is L-glutamine + H2O = L-glutamate + NH4(+). The enzyme catalyses UTP + NH4(+) + ATP = CTP + ADP + phosphate + 2 H(+). It participates in pyrimidine metabolism; CTP biosynthesis via de novo pathway; CTP from UDP: step 2/2. Allosterically activated by GTP, when glutamine is the substrate; GTP has no effect on the reaction when ammonia is the substrate. The allosteric effector GTP functions by stabilizing the protein conformation that binds the tetrahedral intermediate(s) formed during glutamine hydrolysis. Inhibited by the product CTP, via allosteric rather than competitive inhibition. Functionally, catalyzes the ATP-dependent amination of UTP to CTP with either L-glutamine or ammonia as the source of nitrogen. Regulates intracellular CTP levels through interactions with the four ribonucleotide triphosphates. The chain is CTP synthase from Methanothrix thermoacetophila (strain DSM 6194 / JCM 14653 / NBRC 101360 / PT) (Methanosaeta thermophila).